The primary structure comprises 699 residues: MSSQGAGGGVGDPELFAELWRACAGPLVEVPQRDERVFYFLQGHLEQLQEPTDPALLAEQIKMFQVPYKILCKVVNVELKAETETDEVFAQITLQPDPDQENLPTLPDPPLPEQPRPVVHSFCKILTPSDTSTHGGFSVLRRHANECLPPLDMSMATPTQELITKDLHGSEWRFKHIYRGQPRRHLLTTGWSTFVTSKKLISGDAFVYLRSETGEQRVGVRRLVQKQSTMPASVISSQSMHLGVLASASHAIKTNSIFLVYYRPRLSQSQYIVSVNKYLAASKVGFNVGMRFKMSFEGEDVPVKKFSGTIVGEGDLSLQWSGSEWKSLKVQWDEVTNVNGPERVSPWEIETCDGTAPAINVPLQSATKNKRPREPSETIDLQSLEPAQEFWLSGMPQQHEKTGIGSSEPNCISGHQVVWPGEHPGYGAVSSSVCQNPLVLESWLKDFNSSNKGVSPTLSEISQKIFQVTSNEARIATWPARSAYQAEEPTSKLSSNTAACGYRTEEVAPNASKVVEGKKEPAMFRLFGVDLMKCTSISTTTDDKSSVGAGEASAKGTGSHEDSGQLSAFSKVTKEHIAADESPQEIQSHQNYTARTRIKVQMHGNAVGRAVDLANLDGYEQLMNELEEMFNIKDLKQKWKVAFTDDEGDTMEVGDDPWLEFCQMVRKIVLYPIEDEKKIEPHPKLLSSANPEQDQKTGF.

Residues 122 to 224 (FCKILTPSDT…EQRVGVRRLV (103 aa)) constitute a DNA-binding region (TF-B3). Disordered stretches follow at residues 539–565 (TTTDDKSSVGAGEASAKGTGSHEDSGQ) and 680–699 (EPHPKLLSSANPEQDQKTGF). In terms of domain architecture, PB1 spans 595-684 (RTRIKVQMHG…DEKKIEPHPK (90 aa)). Residues 687–699 (SSANPEQDQKTGF) show a composition bias toward polar residues.

The protein belongs to the ARF family. In terms of assembly, homodimers and heterodimers. In terms of tissue distribution, expressed in roots, culms, leaves and young panicles.

It localises to the nucleus. In terms of biological role, auxin response factors (ARFs) are transcriptional factors that bind specifically to the DNA sequence 5'-TGTCTC-3' found in the auxin-responsive promoter elements (AuxREs). The chain is Auxin response factor 1 (ARF1) from Oryza sativa subsp. japonica (Rice).